The sequence spans 1296 residues: Phosphoribosylformylglycinamidine synthase (1296 aa).

The disordered stretch occupies residues 304 to 323 (WPGAATGSGGEIRDEGATGR). Residues 306–317 (GAATGSGGEIRD) and Ala677 each bind ATP. The Mg(2+) site is built by Asp678, Glu717, Asn721, and Asp885. Residue Ser887 coordinates ATP. Over residues 1000-1013 (PDCADQEHQAKQDE) the composition is skewed to basic and acidic residues. The tract at residues 1000-1019 (PDCADQEHQAKQDESDPGLN) is disordered. The Glutamine amidotransferase type-1 domain maps to 1043 to 1296 (VAVLREQGVN…MFRNARKQLG (254 aa)). Cys1136 serves as the catalytic Nucleophile. Active-site residues include His1261 and Glu1263.

It in the N-terminal section; belongs to the FGAMS family. Monomer.

The protein resides in the cytoplasm. The enzyme catalyses N(2)-formyl-N(1)-(5-phospho-beta-D-ribosyl)glycinamide + L-glutamine + ATP + H2O = 2-formamido-N(1)-(5-O-phospho-beta-D-ribosyl)acetamidine + L-glutamate + ADP + phosphate + H(+). It participates in purine metabolism; IMP biosynthesis via de novo pathway; 5-amino-1-(5-phospho-D-ribosyl)imidazole from N(2)-formyl-N(1)-(5-phospho-D-ribosyl)glycinamide: step 1/2. In terms of biological role, phosphoribosylformylglycinamidine synthase involved in the purines biosynthetic pathway. Catalyzes the ATP-dependent conversion of formylglycinamide ribonucleotide (FGAR) and glutamine to yield formylglycinamidine ribonucleotide (FGAM) and glutamate. This Yersinia pestis bv. Antiqua (strain Antiqua) protein is Phosphoribosylformylglycinamidine synthase.